We begin with the raw amino-acid sequence, 102 residues long: Methane monooxygenase component D (102 aa).

As to quaternary structure, the soluble methane monooxygenase (sMMO) consists of four components A/MMOH (composed of alpha/MmoX, beta/MmoY and gamma/MmoZ), B/MMOB (MmoB), C/MMOR (MmoC) and D/MMOD (MmoD).

This is Methane monooxygenase component D (mmoD) from Methylosinus trichosporium.